Reading from the N-terminus, the 1102-residue chain is Probable ubiquitin-conjugating enzyme E2 23 (1102 aa).

6 disordered regions span residues 1 to 20 (MEHEQDDPGTSTNVGVDSSV), 25 to 111 (ASLS…DGNY), 396 to 418 (LPKVTSDDPPQRNPSVSKEPVHE), 579 to 602 (SPGNSFEEATQQDNGYQDSESHQE), 661 to 710 (DESV…DIYA), and 760 to 800 (QAES…KNIL). Positions 31–44 (DSEHPNIYRQDIVK) are enriched in basic and acidic residues. Positions 59–88 (GDSDSDSDISDEEEDDDDDEDNDDDDEDVE) are enriched in acidic residues. Residues 579–596 (SPGNSFEEATQQDNGYQD) are compositionally biased toward polar residues. Residues 779-800 (SKVNVTDNCESKGTQANAKNIL) are compositionally biased toward polar residues. The UBC core domain maps to 850 to 1010 (QWFKKVDQDW…TFLLNCKTMM (161 aa)). C936 (glycyl thioester intermediate) is an active-site residue.

Belongs to the ubiquitin-conjugating enzyme family.

It catalyses the reaction S-ubiquitinyl-[E1 ubiquitin-activating enzyme]-L-cysteine + [E2 ubiquitin-conjugating enzyme]-L-cysteine = [E1 ubiquitin-activating enzyme]-L-cysteine + S-ubiquitinyl-[E2 ubiquitin-conjugating enzyme]-L-cysteine.. It participates in protein modification; protein ubiquitination. Its function is as follows. Accepts the ubiquitin from the E1 complex and catalyzes its covalent attachment to other proteins. The chain is Probable ubiquitin-conjugating enzyme E2 23 (UBC23) from Arabidopsis thaliana (Mouse-ear cress).